We begin with the raw amino-acid sequence, 610 residues long: MLDFLGTKQRTHTCGELRAAHAGETITIMGWVNRRRDHGNLIFLDLRDRYGITQVVLDKDLSAEAHAKAEQARPEYVICATGKVRARSQEAINPKMPTGEIEIAATELLILNDSKVPPFSPAEEAIANEEVRLKYRYLDLRRPEMQHNFEVRHKVALAVRQYLSGQGFFEVETPFMTRSTPEGARDYLVPSRVHPGEFYALPQSPQLFKQILMISGMDRYFQIARCFRDEDLRADRQPEFTQIDLEMTFPQQETIFGVVEGFLAAAFEAVGQQITVPFPRMTYDKAIELYGIDKPDLRLPPMTDVRSVFSDEELQSLKIEPGMPIVAIVIPNKSAMSNTQKKAFGKEVEEQVGAELAYLDVERLRTSPQFALLADRIDAAAAAHCKLERVEPDHRLVVISPRLGAAAVSRDTSWVYKRAGQLRLELGKRFAAEHKAFEKKGTAADYQFLWVTDFPFFEWDEQSHTWTFAHHPFTSPHQDDLIAGRLESDQAAVRALAYDVVLNGTELGSGSIRIHRQDVQQQIFRALGMSDDEAKERFGFFLEALQYGTPPHGGIALGLDRIVMILAGASSLREVIAFPKTAKAIDLMVDAPTPVSDAQLRELHIRPTKQ.

E182 serves as a coordination point for L-aspartate. Residues 206–209 (QLFK) form an aspartate region. R228 lines the L-aspartate pocket. ATP contacts are provided by residues 228–230 (RDE) and Q237. An L-aspartate-binding site is contributed by H470. E506 provides a ligand contact to ATP. An L-aspartate-binding site is contributed by R513. 558-561 (GLDR) is an ATP binding site.

Belongs to the class-II aminoacyl-tRNA synthetase family. Type 1 subfamily. In terms of assembly, homodimer.

It is found in the cytoplasm. It carries out the reaction tRNA(Asx) + L-aspartate + ATP = L-aspartyl-tRNA(Asx) + AMP + diphosphate. In terms of biological role, aspartyl-tRNA synthetase with relaxed tRNA specificity since it is able to aspartylate not only its cognate tRNA(Asp) but also tRNA(Asn). Reaction proceeds in two steps: L-aspartate is first activated by ATP to form Asp-AMP and then transferred to the acceptor end of tRNA(Asp/Asn). The sequence is that of Aspartate--tRNA(Asp/Asn) ligase from Acidobacterium capsulatum (strain ATCC 51196 / DSM 11244 / BCRC 80197 / JCM 7670 / NBRC 15755 / NCIMB 13165 / 161).